The following is a 1760-amino-acid chain: Cilia- and flagella-associated protein 44 (1760 aa).

5 WD repeats span residues 119 to 160, 163 to 202, 213 to 251, 276 to 315, and 388 to 427; these read GATK…MVLR, CHNT…TGLK, LEIS…CCFA, CHEG…VAEG, and FNGG…ELYK. Positions 1155 to 1165 are enriched in basic and acidic residues; the sequence is RQEEKLREQTA. The disordered stretch occupies residues 1155–1224; it reads RQEEKLREQT…FGTAAARTRS (70 aa). A compositionally biased stretch (polar residues) spans 1181 to 1190; it reads PATNTDTSGA. A compositionally biased stretch (basic and acidic residues) spans 1194–1205; it reads ATRRSEGEDSRK. A coiled-coil region spans residues 1348-1389; sequence YDEARNSRDRCLREMEELQRLVQDQTASIEKLQEANKVFRRE. The segment at 1420 to 1444 is disordered; that stretch reads HSDMSGNDDDITSDDDDDDDMGEDE. Acidic residues predominate over residues 1425–1444; sequence GNDDDITSDDDDDDDMGEDE.

The protein belongs to the CFAP44 family.

The protein resides in the cell projection. It is found in the cilium. It localises to the flagellum. The protein localises to the cytoplasm. Its subcellular location is the cytoskeleton. The protein resides in the flagellum axoneme. Flagellar protein involved in flagellum axoneme organization and function. This is Cilia- and flagella-associated protein 44 from Trypanosoma brucei brucei (strain 927/4 GUTat10.1).